The primary structure comprises 108 residues: MLKGQLAGLMKQAQAMQDNLKKAQDELALIEVEGQSGAGLVKVLMTCKHDVKRITIDPSLLADDKDMLEDLVAAAFNDAVRRAAATSEEKMGKLTAGMPLPPGMKLPF.

The interval threonine 86–phenylalanine 108 is disordered. The span at proline 99–phenylalanine 108 shows a compositional bias: pro residues.

The protein belongs to the YbaB/EbfC family. As to quaternary structure, homodimer.

The protein resides in the cytoplasm. It is found in the nucleoid. In terms of biological role, binds to DNA and alters its conformation. May be involved in regulation of gene expression, nucleoid organization and DNA protection. This Methylibium petroleiphilum (strain ATCC BAA-1232 / LMG 22953 / PM1) protein is Nucleoid-associated protein Mpe_A2533.